Consider the following 775-residue polypeptide: Semaphorin-3E (775 aa).

A signal peptide spans 1 to 25; that stretch reads MAPAGHILTLLLWGHLLELWTPGHS. The Sema domain occupies 32-516; sequence RLRLSHKELL…SASAVAQVRF (485 aa). An N-linked (GlcNAc...) asparagine glycan is attached at asparagine 44. A disulfide bridge links cysteine 105 with cysteine 115. N-linked (GlcNAc...) asparagine glycosylation occurs at asparagine 126. Cysteine 133 and cysteine 142 are joined by a disulfide. Residues asparagine 175 and asparagine 330 are each glycosylated (N-linked (GlcNAc...) asparagine). Intrachain disulfides connect cysteine 270-cysteine 382, cysteine 294-cysteine 342, and cysteine 519-cysteine 537. In terms of domain architecture, Ig-like C2-type spans 581-669; that stretch reads ALDRTEERLA…NFVHTVRKIT (89 aa). An N-linked (GlcNAc...) asparagine glycan is attached at asparagine 596. A disulfide bridge connects residues cysteine 654 and cysteine 729.

It belongs to the semaphorin family. Interacts with PLXND1. As to expression, detected in neurons in the thalamus. Detected in embryonic vasculature. Developing lungs, developing skeletal elements and ventral horns of the developing neural tube. Correlates positively with tumor progression.

Its subcellular location is the secreted. Functionally, plays an important role in signaling via the cell surface receptor PLXND1. Mediates reorganization of the actin cytoskeleton, leading to the retraction of cell projections. Promotes focal adhesion disassembly and inhibits adhesion of endothelial cells to the extracellular matrix. Regulates angiogenesis, both during embryogenesis and after birth. Can down-regulate sprouting angiogenesis. Required for normal vascular patterning during embryogenesis. Plays an important role in ensuring the specificity of synapse formation. The chain is Semaphorin-3E (Sema3e) from Mus musculus (Mouse).